The sequence spans 255 residues: MNILVTNDDGVTADGILCLARYLSKKHEVTVVAPETEQSAVGHAITLRFPLWLRKIDINEEFEIYAVSGTPADCVKMGIDVVLKEKPDLLISGINRGNNLGTDVVYSGTVSGALEGAIAGVPSIAISSFSFENPLYETAAKFILEFLEEFDVKSIPRFTALNINVPSVPYGELKGWKLTRQSKRMYEDYFEQRKDPSGGNYYWMMGNIIENDPDPKADYKAVAEKYVSVTPISVFLTNEEYLKRLEERYEDKAIR.

The a divalent metal cation site is built by Asp-8, Asp-9, Ser-39, and Asn-95.

It belongs to the SurE nucleotidase family. A divalent metal cation is required as a cofactor.

It localises to the cytoplasm. It catalyses the reaction a ribonucleoside 5'-phosphate + H2O = a ribonucleoside + phosphate. In terms of biological role, nucleotidase that shows phosphatase activity on nucleoside 5'-monophosphates. In Thermosipho melanesiensis (strain DSM 12029 / CIP 104789 / BI429), this protein is 5'-nucleotidase SurE.